The sequence spans 221 residues: UPF0319 protein CGSHiEE_03630 (221 aa).

The signal sequence occupies residues 1–21; the sequence is MKLRAVVLGLATLCTSTATFA.

Belongs to the UPF0319 family.

The polypeptide is UPF0319 protein CGSHiEE_03630 (Haemophilus influenzae (strain PittEE)).